A 461-amino-acid chain; its full sequence is MEEKKKELEELKYQSGFGNHFSSEAIAGALPLDQNSPLLCPYGLYAEQISGTSFTSPRKLNQRSWLYRVKPSVTHEPFKPRVPAHKKLVSEFDASNSRTNPTQLRWRPEDIPDSEIDFVDGLFTICGAGSSFLRHGFAIHMYVANTGMKDSAFCNADGDFLLVPQTGRLWIETECGRLLVTPGEIAVIPQGFRFSIDLPDGKSRGYVAEIYGAHFQLPDLGPIGANGLAASRDFLAPTAWFEDGLRPEYTIVQKFGGELFTAKQDFSPFNVVAWHGNYVPYKYDLKKFCPYNTVLLDHGDPSINTVLTAPTDKPGVALLDFVIFPPRWLVAEHTFRPPYYHRNCMSEFMGLIYGAYEAKADGFLPGGASLHSCMTPHGPDTTTYEATIARVNAMAPSKLTGTMAFMFESALIPRVCHWALESPFLDHDYYQCWIGLKSHFSRISLDKTNVESTEKEPGASE.

His341, Glu347, and His377 together coordinate Fe cation.

This sequence belongs to the homogentisate dioxygenase family. It depends on Fe cation as a cofactor.

The catalysed reaction is homogentisate + O2 = 4-maleylacetoacetate + H(+). It functions in the pathway amino-acid degradation; L-phenylalanine degradation; acetoacetate and fumarate from L-phenylalanine: step 4/6. The chain is Homogentisate 1,2-dioxygenase (HGO) from Arabidopsis thaliana (Mouse-ear cress).